We begin with the raw amino-acid sequence, 143 residues long: Anti-sigma F factor (143 aa).

Belongs to the anti-sigma-factor family.

It catalyses the reaction L-seryl-[protein] + ATP = O-phospho-L-seryl-[protein] + ADP + H(+). The catalysed reaction is L-threonyl-[protein] + ATP = O-phospho-L-threonyl-[protein] + ADP + H(+). Its function is as follows. Binds to sigma F and blocks its ability to form an RNA polymerase holoenzyme (E-sigma F). Phosphorylates SpoIIAA on a serine residue. This phosphorylation may enable SpoIIAA to act as an anti-anti-sigma factor that counteracts SpoIIAB and thus releases sigma F from inhibition. This is Anti-sigma F factor from Clostridium botulinum (strain Eklund 17B / Type B).